Consider the following 616-residue polypeptide: Dihydroxy-acid dehydratase (616 aa).

Asp81 provides a ligand contact to Mg(2+). Cys122 lines the [2Fe-2S] cluster pocket. Residues Asp123 and Lys124 each coordinate Mg(2+). The residue at position 124 (Lys124) is an N6-carboxylysine. [2Fe-2S] cluster is bound at residue Cys196. Glu496 contacts Mg(2+). Ser522 (proton acceptor) is an active-site residue.

It belongs to the IlvD/Edd family. In terms of assembly, homodimer. The cofactor is [2Fe-2S] cluster. Requires Mg(2+) as cofactor.

It carries out the reaction (2R)-2,3-dihydroxy-3-methylbutanoate = 3-methyl-2-oxobutanoate + H2O. The enzyme catalyses (2R,3R)-2,3-dihydroxy-3-methylpentanoate = (S)-3-methyl-2-oxopentanoate + H2O. Its pathway is amino-acid biosynthesis; L-isoleucine biosynthesis; L-isoleucine from 2-oxobutanoate: step 3/4. The protein operates within amino-acid biosynthesis; L-valine biosynthesis; L-valine from pyruvate: step 3/4. Its function is as follows. Functions in the biosynthesis of branched-chain amino acids. Catalyzes the dehydration of (2R,3R)-2,3-dihydroxy-3-methylpentanoate (2,3-dihydroxy-3-methylvalerate) into 2-oxo-3-methylpentanoate (2-oxo-3-methylvalerate) and of (2R)-2,3-dihydroxy-3-methylbutanoate (2,3-dihydroxyisovalerate) into 2-oxo-3-methylbutanoate (2-oxoisovalerate), the penultimate precursor to L-isoleucine and L-valine, respectively. The chain is Dihydroxy-acid dehydratase from Streptomyces griseus subsp. griseus (strain JCM 4626 / CBS 651.72 / NBRC 13350 / KCC S-0626 / ISP 5235).